The primary structure comprises 228 residues: Protein JAZ7 (228 aa).

The Tify domain maps to 101–136 (LSPNESTLTIFYMGEVHIFPGISPEKAELIIDLVSK). The Jas signature appears at 176–199 (MARRATLARFLEKRKHRLIKARPY). A Nuclear localization signal motif is present at residues 177 to 184 (ARRATLAR).

It belongs to the TIFY/JAZ family. In terms of assembly, interacts with MYC2 (via N-terminus). JAZ7 competes with MED25 for binding to MYC2. Interacts with MTB1 (via N-terminus).

It is found in the nucleus. Its function is as follows. Repressor of jasmonate responses. The polypeptide is Protein JAZ7 (Solanum lycopersicum (Tomato)).